Consider the following 154-residue polypeptide: Endoribonuclease YbeY (154 aa).

The Zn(2+) site is built by His113, His117, and His123.

It belongs to the endoribonuclease YbeY family. The cofactor is Zn(2+).

Its subcellular location is the cytoplasm. Functionally, single strand-specific metallo-endoribonuclease involved in late-stage 70S ribosome quality control and in maturation of the 3' terminus of the 16S rRNA. This chain is Endoribonuclease YbeY, found in Vibrio vulnificus (strain CMCP6).